The primary structure comprises 554 residues: Beta-eudesmol synthase (554 aa).

3 residues coordinate Mg(2+): D305, D309, and E456. Positions 305–309 (DDIYD) match the DDXXD motif motif.

It belongs to the terpene synthase family. Requires Mg(2+) as cofactor. The cofactor is Mn(2+). As to expression, expressed in rhizomes. Detected in stems, but not in leaves.

The protein resides in the cytoplasm. The enzyme catalyses (2E,6E)-farnesyl diphosphate + H2O = beta-eudesmol + diphosphate. The catalysed reaction is (2E,6E)-farnesyl diphosphate + H2O = 10-epi-gamma-eudesmol + diphosphate. It catalyses the reaction (2E,6E)-farnesyl diphosphate + H2O = alpha-eudesmol + diphosphate. The protein operates within secondary metabolite biosynthesis; terpenoid biosynthesis. Involved in the biosynthesis of beta-eudesmol, a sesquiterpene with antifungal activity and responsible for resistance of plants to ant attack. Produces mainly beta-eudesmol, but also smaller amounts of 10-epi-gamma-eudesmol, alpha-eudesmol and aristolene. The protein is Beta-eudesmol synthase (ZSS2) of Zingiber zerumbet (Shampoo ginger).